A 212-amino-acid polypeptide reads, in one-letter code: Large ribosomal subunit protein bL25 (212 aa).

The tract at residues 1–25 is disordered; it reads MSQSTIHKIAVKKRTETGKNENNRL. Residues 13–24 are compositionally biased toward basic and acidic residues; that stretch reads KRTETGKNENNR.

The protein belongs to the bacterial ribosomal protein bL25 family. CTC subfamily. Part of the 50S ribosomal subunit; part of the 5S rRNA/L5/L18/L25 subcomplex. Contacts the 5S rRNA. Binds to the 5S rRNA independently of L5 and L18.

Its function is as follows. This is one of the proteins that binds to the 5S RNA in the ribosome where it forms part of the central protuberance. This is Large ribosomal subunit protein bL25 from Leptospira borgpetersenii serovar Hardjo-bovis (strain JB197).